The primary structure comprises 845 residues: MPLSYQHFRKLLLLDDETEAGPLEEELPRLADADLNRRVAEDLNLGNLNVSIPWTHKVGNFTGLYSSTVPIFNPEWQTPSFPKIHLHEDIANRCQQFVGPLTVNEKRRLKLIMPARFYPNSTKYLPLDKGIKTYYPDHVVNHYFQTRHYLHTLWKAGILYKRETTRSASFCGSPYSWEQELHHGRLVIKTSQRHGDEPFCSQPSGILSRSSVGPCIRSQFKQSRLGLQPHQGPLATSQPGRSGSIWARVHSPTRRCFGVEPSGSGHIGHRASDASSCLHQSAVRKAAYSHLSTSKRQSSSGHAVEFHSFPPSSARSQSQGPVFSCWWLQFRNTQPCSNYCLSHLVNLLEDWGPCTEHGEHHIRIPRTPARVTGGVFLVDKNPHNTAESRLVVDFSQFSRGSTRVSWPKFAVPNLQSLTNLLSSNLSWLSLDVSAAFYHIPLHPAAMPHLLIGSSGLSRYVARLSSNSRINNNQHGTLQNLHDSCSRQLYVSLMLLYKTYGWKLHLYSHPIILGFRKIPMGVGLSPFLLAQFTSAICSVVRRAFPHCLAFSYMDDVVLGAKSVQHLESLYTAVTNFLLSLGIHLNPNKTKRWGYSLNFMGYVIGSWGTLPQDHIVQKIKHCFRKLPVNRPIDWKVCQRLVGLLGFAAPFTQCGYPALMPLYACIQAKQAFTFSPTYKAFLSKQYMNLYPVARQRPGLCQVFADATPTGWGLAIGHQRMRETFVAPLPIHTAELLAACFARSRSGAKLIGTDNSVVLSQKYTSFPWLLGCTANWILRGTSFVYVPSALNPADDPSRGRLGLYRPLLRLPYRPTTGRTSLYAVSPSVPSHLPVRVHFASPLHVAWRPP.

The terminal protein domain (TP) stretch occupies residues 1–179 (MPLSYQHFRK…FCGSPYSWEQ (179 aa)). A spacer region spans residues 180 to 348 (ELHHGRLVIK…YCLSHLVNLL (169 aa)). The polymerase/reverse transcriptase domain (RT) stretch occupies residues 349-692 (EDWGPCTEHG…YMNLYPVARQ (344 aa)). The 244-residue stretch at 359 to 602 (EHHIRIPRTP…YSLNFMGYVI (244 aa)) folds into the Reverse transcriptase domain. Mg(2+) is bound by residues D431, D553, and D554.

Belongs to the hepadnaviridae P protein family.

It carries out the reaction DNA(n) + a 2'-deoxyribonucleoside 5'-triphosphate = DNA(n+1) + diphosphate. It catalyses the reaction Endonucleolytic cleavage to 5'-phosphomonoester.. Activated by host HSP70 and HSP40 in vitro to be able to bind the epsilon loop of the pgRNA. Because deletion of the RNase H region renders the protein partly chaperone-independent, the chaperones may be needed indirectly to relieve occlusion of the RNA-binding site by this domain. Inhibited by several reverse-transcriptase inhibitors: Lamivudine, Adefovir and Entecavir. In terms of biological role, multifunctional enzyme that converts the viral RNA genome into dsDNA in viral cytoplasmic capsids. This enzyme displays a DNA polymerase activity that can copy either DNA or RNA templates, and a ribonuclease H (RNase H) activity that cleaves the RNA strand of RNA-DNA heteroduplexes in a partially processive 3'- to 5'-endonucleasic mode. Neo-synthesized pregenomic RNA (pgRNA) are encapsidated together with the P protein, and reverse-transcribed inside the nucleocapsid. Initiation of reverse-transcription occurs first by binding the epsilon loop on the pgRNA genome, and is initiated by protein priming, thereby the 5'-end of (-)DNA is covalently linked to P protein. Partial (+)DNA is synthesized from the (-)DNA template and generates the relaxed circular DNA (RC-DNA) genome. After budding and infection, the RC-DNA migrates in the nucleus, and is converted into a plasmid-like covalently closed circular DNA (cccDNA). The activity of P protein does not seem to be necessary for cccDNA generation, and is presumably released from (+)DNA by host nuclear DNA repair machinery. This is Protein P from Homo sapiens (Human).